Reading from the N-terminus, the 378-residue chain is Erythronate-4-phosphate dehydrogenase (378 aa).

Residues Ser45 and Thr66 each coordinate substrate. 2 residues coordinate NAD(+): Asp146 and Thr175. Residue Arg208 is part of the active site. Asp232 provides a ligand contact to NAD(+). Residue Glu237 is part of the active site. His254 functions as the Proton donor in the catalytic mechanism. Residue Gly257 coordinates NAD(+). Residue Tyr258 participates in substrate binding.

This sequence belongs to the D-isomer specific 2-hydroxyacid dehydrogenase family. PdxB subfamily. Homodimer.

The protein localises to the cytoplasm. It carries out the reaction 4-phospho-D-erythronate + NAD(+) = (R)-3-hydroxy-2-oxo-4-phosphooxybutanoate + NADH + H(+). The protein operates within cofactor biosynthesis; pyridoxine 5'-phosphate biosynthesis; pyridoxine 5'-phosphate from D-erythrose 4-phosphate: step 2/5. Functionally, catalyzes the oxidation of erythronate-4-phosphate to 3-hydroxy-2-oxo-4-phosphonooxybutanoate. The polypeptide is Erythronate-4-phosphate dehydrogenase (Escherichia coli O157:H7).